A 636-amino-acid chain; its full sequence is Basic helix-loop-helix ARNT-like protein 2 (636 aa).

A disordered region spans residues 25-62 (VSSRVSPGTRPTAMGSFSSHMTEFPRKRKGSDSDPSQS). Residues 46 to 258 (TEFPRKRKGS…SPREKLIDAK (213 aa)) are interaction with PER2. The Nuclear localization signal signature appears at 49-54 (PRKRKG). A bHLH domain is found at 107–160 (AFREAHSQTEKRRRDKMNNLIEELSAMIPQCNPMARKLDKLTVLRMAVQHLRSL). A Nuclear export signal 1 motif is present at residues 177–187 (LQDNELRHLIL). A PAS 1 domain is found at 178-250 (QDNELRHLIL…EQLSSFDISP (73 aa)). A Glycyl lysine isopeptide (Lys-Gly) (interchain with G-Cter in SUMO2 and SUMO3) cross-link involves residue Lys-287. Residue Lys-294 forms a Glycyl lysine isopeptide (Lys-Gly) (interchain with G-Cter in SUMO2) linkage. Residues 357–427 (VPQNSGEINV…DKHKAVLQSK (71 aa)) enclose the PAS 2 domain. The Nuclear export signal 2 signature appears at 392-400 (LGYLPQELL). Residues 432 to 475 (TDSYKFRAKDGSFVTLKSQWFSFTNPWTKELEYIVSVNTLVLGH) form the PAC domain.

As to quaternary structure, component of the circadian core oscillator, which includes the CRY proteins, CLOCK, or NPAS2, BMAL1 or BMAL2, CSNK1D and/or CSNK1E, TIMELESS and the PER proteins. Interacts directly with CLOCK to form the BMAL2-CLOCK transactivator. Can form heterodimers or homodimers which interact directly with CLOCK to form the transcription activator. Interacts with NPAS2 and HIF1A. Interacts with PER2. In terms of tissue distribution, expressed in fetal brain. Highly expressed in brain and placenta. Lower levels in heart, liver, thymus, kidney and lung. Located to endothelial cells and neuronal cells of the suprachiasmatic nucleus (SCN). Also detected in endothelial cells of the heart, lung and kidney. In the brain, specifically expressed in the thalamus, hippocampus and amygdala.

The protein resides in the nucleus. Functionally, transcriptional activator which forms a core component of the circadian clock. The circadian clock, an internal time-keeping system, regulates various physiological processes through the generation of approximately 24 hour circadian rhythms in gene expression, which are translated into rhythms in metabolism and behavior. It is derived from the Latin roots 'circa' (about) and 'diem' (day) and acts as an important regulator of a wide array of physiological functions including metabolism, sleep, body temperature, blood pressure, endocrine, immune, cardiovascular, and renal function. Consists of two major components: the central clock, residing in the suprachiasmatic nucleus (SCN) of the brain, and the peripheral clocks that are present in nearly every tissue and organ system. Both the central and peripheral clocks can be reset by environmental cues, also known as Zeitgebers (German for 'timegivers'). The predominant Zeitgeber for the central clock is light, which is sensed by retina and signals directly to the SCN. The central clock entrains the peripheral clocks through neuronal and hormonal signals, body temperature and feeding-related cues, aligning all clocks with the external light/dark cycle. Circadian rhythms allow an organism to achieve temporal homeostasis with its environment at the molecular level by regulating gene expression to create a peak of protein expression once every 24 hours to control when a particular physiological process is most active with respect to the solar day. Transcription and translation of core clock components (CLOCK, NPAS2, BMAL1, BMAL2, PER1, PER2, PER3, CRY1 and CRY2) plays a critical role in rhythm generation, whereas delays imposed by post-translational modifications (PTMs) are important for determining the period (tau) of the rhythms (tau refers to the period of a rhythm and is the length, in time, of one complete cycle). A diurnal rhythm is synchronized with the day/night cycle, while the ultradian and infradian rhythms have a period shorter and longer than 24 hours, respectively. Disruptions in the circadian rhythms contribute to the pathology of cardiovascular diseases, cancer, metabolic syndromes and aging. A transcription/translation feedback loop (TTFL) forms the core of the molecular circadian clock mechanism. Transcription factors, CLOCK or NPAS2 and BMAL1 or BMAL2, form the positive limb of the feedback loop, act in the form of a heterodimer and activate the transcription of core clock genes and clock-controlled genes (involved in key metabolic processes), harboring E-box elements (5'-CACGTG-3') within their promoters. The core clock genes: PER1/2/3 and CRY1/2 which are transcriptional repressors form the negative limb of the feedback loop and interact with the CLOCK|NPAS2-BMAL1|BMAL2 heterodimer inhibiting its activity and thereby negatively regulating their own expression. This heterodimer also activates nuclear receptors NR1D1/2 and RORA/B/G, which form a second feedback loop and which activate and repress BMAL1 transcription, respectively. The CLOCK-BMAL2 heterodimer activates the transcription of SERPINE1/PAI1 and BHLHE40/DEC1. This is Basic helix-loop-helix ARNT-like protein 2 from Homo sapiens (Human).